A 319-amino-acid chain; its full sequence is Protease HtpX homolog (319 aa).

A run of 2 helical transmembrane segments spans residues 6–26 (TAML…VIGG) and 28–48 (GGMM…YWNS). His130 is a Zn(2+) binding site. Residue Glu131 is part of the active site. His134 serves as a coordination point for Zn(2+). The next 2 membrane-spanning stretches (helical) occupy residues 145–165 (LTAT…FFGG) and 172–192 (PLGF…AMLV). Glu201 contributes to the Zn(2+) binding site. The tract at residues 279–319 (REMSAGSTAPARPDNAVRRSRSVPKTGWGRGGSEPPKGPWS) is disordered.

This sequence belongs to the peptidase M48B family. The cofactor is Zn(2+).

Its subcellular location is the cell inner membrane. In Sinorhizobium fredii (strain NBRC 101917 / NGR234), this protein is Protease HtpX homolog.